The primary structure comprises 121 residues: Trypsin/alpha-amylase inhibitor CMX2 (121 aa).

Residues 1 to 24 form the signal peptide; it reads MAFKHQLILSTAILLAVLAAASAS.

Belongs to the protease inhibitor I6 (cereal trypsin/alpha-amylase inhibitor) family.

The protein resides in the secreted. This chain is Trypsin/alpha-amylase inhibitor CMX2, found in Triticum aestivum (Wheat).